A 298-amino-acid chain; its full sequence is Probable protein phosphatase 2C 26 (298 aa).

Residues 48 to 295 enclose the PPM-type phosphatase domain; it reads SVGIHAIPHP…DDVTVIVAKV (248 aa). Mn(2+) contacts are provided by D82, G83, D213, and D286.

This sequence belongs to the PP2C family. Mg(2+) serves as cofactor. It depends on Mn(2+) as a cofactor.

It catalyses the reaction O-phospho-L-seryl-[protein] + H2O = L-seryl-[protein] + phosphate. The enzyme catalyses O-phospho-L-threonyl-[protein] + H2O = L-threonyl-[protein] + phosphate. The polypeptide is Probable protein phosphatase 2C 26 (Arabidopsis thaliana (Mouse-ear cress)).